Consider the following 119-residue polypeptide: FAD-linked sulfhydryl oxidase (119 aa).

In terms of domain architecture, ERV/ALR sulfhydryl oxidase spans 1 to 97 (MLHWGPKFWR…ISWSEYKNIY (97 aa)). A disulfide bond links Cys44 and Cys47.

It belongs to the asfivirus B119L family. In terms of assembly, interacts with A151R. FAD serves as cofactor.

It is found in the host cytoplasm. The protein resides in the virion. It carries out the reaction 2 R'C(R)SH + O2 = R'C(R)S-S(R)CR' + H2O2. Its function is as follows. FAD-dependent sulfhydryl oxidase that catalyzes the formation of disulfide bonds in viral proteins produced in the cell cytoplasm. Involved in virion maturation. This chain is FAD-linked sulfhydryl oxidase, found in Ornithodoros (relapsing fever ticks).